A 482-amino-acid chain; its full sequence is [Fructose-bisphosphate aldolase]-lysine N-methyltransferase, chloroplastic (482 aa).

A chloroplast-targeting transit peptide spans 1–57 (MSASVAVVSGFLRIPSIQKSQNPSFLFSRPKKSLVRPISASSSELPENVRNFWKWLR). Residues 59–282 (QGVVSGKSVA…AGEQVYIQYD (224 aa)) form the SET domain. S-adenosyl-L-methionine is bound by residues 75–77 (EGL) and Arg-217. Residues Arg-217, Arg-221, and Asp-234 each contribute to the substrate site. S-adenosyl-L-methionine is bound at residue 237–238 (NH). Tyr-249, Tyr-281, and Tyr-294 together coordinate substrate.

This sequence belongs to the class V-like SAM-binding methyltransferase superfamily. Plant protein-lysine LSMT methyltransferase family.

The protein localises to the plastid. The protein resides in the chloroplast stroma. The catalysed reaction is [fructose-bisphosphate aldolase]-L-lysine + 3 S-adenosyl-L-methionine = [fructose-bisphosphate aldolase]-N(6),N(6),N(6)-trimethyl-L-lysine + 3 S-adenosyl-L-homocysteine + 3 H(+). Functionally, protein-lysine methyltransferase methylating chloroplastic fructose 1,6-bisphosphate aldolases. Can also use with low efficiency gamma-tocopherol methyltransferase as substrate, but not a cytosolic aldolase. Able to interact with unmethylated Rubisco, but unlike in pea, the complex is catalytically unproductive. The polypeptide is [Fructose-bisphosphate aldolase]-lysine N-methyltransferase, chloroplastic (LSMT-L) (Arabidopsis thaliana (Mouse-ear cress)).